A 151-amino-acid polypeptide reads, in one-letter code: Urease accessory protein UreE (151 aa).

This sequence belongs to the UreE family.

It is found in the cytoplasm. Functionally, involved in urease metallocenter assembly. Binds nickel. Probably functions as a nickel donor during metallocenter assembly. The protein is Urease accessory protein UreE of Bacillus cereus (strain ATCC 10987 / NRS 248).